We begin with the raw amino-acid sequence, 373 residues long: Queuine tRNA-ribosyltransferase (373 aa).

Asp-90 functions as the Proton acceptor in the catalytic mechanism. Substrate contacts are provided by residues 90–94 (DSGGF), Asp-144, Gln-193, and Gly-220. The RNA binding stretch occupies residues 251–257 (GVGTPED). Residue Asp-270 is the Nucleophile of the active site. The RNA binding; important for wobble base 34 recognition stretch occupies residues 275–279 (TRNAR). 4 residues coordinate Zn(2+): Cys-308, Cys-310, Cys-313, and His-339.

This sequence belongs to the queuine tRNA-ribosyltransferase family. Homodimer. Within each dimer, one monomer is responsible for RNA recognition and catalysis, while the other monomer binds to the replacement base PreQ1. The cofactor is Zn(2+).

It carries out the reaction 7-aminomethyl-7-carbaguanine + guanosine(34) in tRNA = 7-aminomethyl-7-carbaguanosine(34) in tRNA + guanine. It participates in tRNA modification; tRNA-queuosine biosynthesis. Functionally, catalyzes the base-exchange of a guanine (G) residue with the queuine precursor 7-aminomethyl-7-deazaguanine (PreQ1) at position 34 (anticodon wobble position) in tRNAs with GU(N) anticodons (tRNA-Asp, -Asn, -His and -Tyr). Catalysis occurs through a double-displacement mechanism. The nucleophile active site attacks the C1' of nucleotide 34 to detach the guanine base from the RNA, forming a covalent enzyme-RNA intermediate. The proton acceptor active site deprotonates the incoming PreQ1, allowing a nucleophilic attack on the C1' of the ribose to form the product. After dissociation, two additional enzymatic reactions on the tRNA convert PreQ1 to queuine (Q), resulting in the hypermodified nucleoside queuosine (7-(((4,5-cis-dihydroxy-2-cyclopenten-1-yl)amino)methyl)-7-deazaguanosine). This is Queuine tRNA-ribosyltransferase from Campylobacter jejuni subsp. jejuni serotype O:23/36 (strain 81-176).